We begin with the raw amino-acid sequence, 616 residues long: Dihydroxy-acid dehydratase (616 aa).

Residue aspartate 81 participates in Mg(2+) binding. Residue cysteine 122 coordinates [2Fe-2S] cluster. Mg(2+)-binding residues include aspartate 123 and lysine 124. Lysine 124 carries the N6-carboxylysine modification. [2Fe-2S] cluster is bound at residue cysteine 195. Glutamate 491 contacts Mg(2+). Serine 517 acts as the Proton acceptor in catalysis.

Belongs to the IlvD/Edd family. Homodimer. Requires [2Fe-2S] cluster as cofactor. Mg(2+) serves as cofactor.

It carries out the reaction (2R)-2,3-dihydroxy-3-methylbutanoate = 3-methyl-2-oxobutanoate + H2O. The enzyme catalyses (2R,3R)-2,3-dihydroxy-3-methylpentanoate = (S)-3-methyl-2-oxopentanoate + H2O. It participates in amino-acid biosynthesis; L-isoleucine biosynthesis; L-isoleucine from 2-oxobutanoate: step 3/4. It functions in the pathway amino-acid biosynthesis; L-valine biosynthesis; L-valine from pyruvate: step 3/4. Its function is as follows. Functions in the biosynthesis of branched-chain amino acids. Catalyzes the dehydration of (2R,3R)-2,3-dihydroxy-3-methylpentanoate (2,3-dihydroxy-3-methylvalerate) into 2-oxo-3-methylpentanoate (2-oxo-3-methylvalerate) and of (2R)-2,3-dihydroxy-3-methylbutanoate (2,3-dihydroxyisovalerate) into 2-oxo-3-methylbutanoate (2-oxoisovalerate), the penultimate precursor to L-isoleucine and L-valine, respectively. This Escherichia coli (strain SMS-3-5 / SECEC) protein is Dihydroxy-acid dehydratase.